A 231-amino-acid chain; its full sequence is Probable glutathione S-transferase (231 aa).

In terms of domain architecture, GST N-terminal spans 4–96; it reads PNFELYGYFR…YLEEALPTNA (93 aa). Glutathione contacts are provided by residues serine 14, glutamine 43, valine 57, 80–81, glutamine 124, and 128–130; these read QS and NLK. The GST C-terminal domain maps to 105–227; sequence NPVARAHVRT…HWQKQEDTPE (123 aa).

It belongs to the GST superfamily. Zeta family. In terms of assembly, homodimer.

It carries out the reaction RX + glutathione = an S-substituted glutathione + a halide anion + H(+). Probable glutathione S-transferase. The protein is Probable glutathione S-transferase of Coccidioides immitis (strain RS) (Valley fever fungus).